The primary structure comprises 224 residues: 7-cyano-7-deazaguanine synthase (224 aa).

10 to 20 (LSGGLDSATVV) lines the ATP pocket. Zn(2+)-binding residues include C189, C199, C202, and C205.

It belongs to the QueC family. It depends on Zn(2+) as a cofactor.

The enzyme catalyses 7-carboxy-7-deazaguanine + NH4(+) + ATP = 7-cyano-7-deazaguanine + ADP + phosphate + H2O + H(+). It participates in purine metabolism; 7-cyano-7-deazaguanine biosynthesis. Functionally, catalyzes the ATP-dependent conversion of 7-carboxy-7-deazaguanine (CDG) to 7-cyano-7-deazaguanine (preQ(0)). The protein is 7-cyano-7-deazaguanine synthase of Pseudomonas paraeruginosa (strain DSM 24068 / PA7) (Pseudomonas aeruginosa (strain PA7)).